Reading from the N-terminus, the 159-residue chain is Siroheme decarboxylase beta subunit (159 aa).

152–157 (KTSMTY) is a binding site for substrate.

It belongs to the Ahb/Nir family. As to quaternary structure, forms a heterodimer composed of AhbA and AhbB.

The enzyme catalyses siroheme + 2 H(+) = 12,18-didecarboxysiroheme + 2 CO2. Its pathway is porphyrin-containing compound metabolism; protoheme biosynthesis. In terms of biological role, involved in siroheme-dependent heme b biosynthesis. Catalyzes the decarboxylation of siroheme into didecarboxysiroheme. Siroheme is decarboxylated to monodecarboxysiroheme, which is in turn decarboxylated to didecarboxysiroheme. This is Siroheme decarboxylase beta subunit from Desulfovibrio desulfuricans (strain ATCC 27774 / DSM 6949 / MB).